The chain runs to 1404 residues: DNA-directed RNA polymerase subunit beta' (1404 aa).

The Zn(2+) site is built by cysteine 72, cysteine 74, cysteine 87, and cysteine 90. Residues aspartate 462, aspartate 464, and aspartate 466 each contribute to the Mg(2+) site. Zn(2+) is bound by residues cysteine 816, cysteine 890, cysteine 897, and cysteine 900.

It belongs to the RNA polymerase beta' chain family. As to quaternary structure, the RNAP catalytic core consists of 2 alpha, 1 beta, 1 beta' and 1 omega subunit. When a sigma factor is associated with the core the holoenzyme is formed, which can initiate transcription. Mg(2+) serves as cofactor. Zn(2+) is required as a cofactor.

The enzyme catalyses RNA(n) + a ribonucleoside 5'-triphosphate = RNA(n+1) + diphosphate. Functionally, DNA-dependent RNA polymerase catalyzes the transcription of DNA into RNA using the four ribonucleoside triphosphates as substrates. This is DNA-directed RNA polymerase subunit beta' from Azoarcus sp. (strain BH72).